We begin with the raw amino-acid sequence, 620 residues long: Chaperone protein HscA homolog (620 aa).

The protein belongs to the heat shock protein 70 family.

Its function is as follows. Chaperone involved in the maturation of iron-sulfur cluster-containing proteins. Has a low intrinsic ATPase activity which is markedly stimulated by HscB. This chain is Chaperone protein HscA homolog, found in Pseudomonas putida (strain ATCC 47054 / DSM 6125 / CFBP 8728 / NCIMB 11950 / KT2440).